Here is a 258-residue protein sequence, read N- to C-terminus: MDASYRRDGRGGGGGGGGGGSAPRSVEDIFKDFRARRTAILRALTHDVEDFYAQCDPEKENLCLYGYANEAWQVALPAEEVPTELPEPALGINFARDGMNRRDWLALVAVHSDSWLVSVAFYYAARLNRNDRKRLFGMMNDLPTVYEVVSGSRQSKERDRSGMDNSSRNKISSKHTSDVARVENNIKEEDEGYDEDDGDHSETLCGTCGGIYSADEFWIGCDVCERWYHGKCVKITPAKAESIKQYKCPSCSSKRPRQ.

Residues 1-10 (MDASYRRDGR) are compositionally biased toward basic and acidic residues. Disordered stretches follow at residues 1 to 24 (MDASYRRDGRGGGGGGGGGGSAPR) and 150 to 200 (SGSR…DGDH). Residues 11-21 (GGGGGGGGGGS) are compositionally biased toward gly residues. A compositionally biased stretch (basic and acidic residues) spans 175 to 187 (HTSDVARVENNIK). Residues 188-199 (EEDEGYDEDDGD) show a composition bias toward acidic residues. The PHD-type zinc finger occupies 202–254 (ETLCGTCGGIYSADEFWIGCDVCERWYHGKCVKITPAKAESIKQYKCPSCSSK).

This sequence belongs to the Alfin family. Interacts with H3K4me3 and to a lesser extent with H3K4me2.

It localises to the nucleus. Functionally, histone-binding component that specifically recognizes H3 tails trimethylated on 'Lys-4' (H3K4me3), which mark transcription start sites of virtually all active genes. This Oryza sativa subsp. indica (Rice) protein is PHD finger protein ALFIN-LIKE 1.